The sequence spans 104 residues: Large ribosomal subunit protein bL21 (104 aa).

It belongs to the bacterial ribosomal protein bL21 family. As to quaternary structure, part of the 50S ribosomal subunit. Contacts protein L20.

In terms of biological role, this protein binds to 23S rRNA in the presence of protein L20. The polypeptide is Large ribosomal subunit protein bL21 (Streptococcus uberis (strain ATCC BAA-854 / 0140J)).